The sequence spans 280 residues: Retinoschisin (280 aa).

The N-terminal stretch at 1-23 is a signal peptide; that stretch reads MHLPREAFLLALAGAFIFPSSQQ. The F5/8 type C domain maps to 119-275; sequence CPYHRPLGFE…IALRLELLLC (157 aa). Cystine bridges form between Cys-119–Cys-275 and Cys-166–Cys-198.

As to quaternary structure, homooctamer of 4 homodimers; disulfide-linked. The homooctamer has a flat, cogwheel structure with a diameter of about 14 nm. Two stacked octamers can assemble to form a hexadecamer.

The protein localises to the secreted. Its subcellular location is the cell membrane. Its function is as follows. Binds negatively charged membrane lipids, such as phosphatidylserine and phosphoinositides. May play a role in cell-cell adhesion processes in the retina, via homomeric interaction between octamers present on the surface of two neighboring cells. Required for normal structure and function of the retina. The protein is Retinoschisin (xlrs1) of Takifugu rubripes (Japanese pufferfish).